Consider the following 447-residue polypeptide: C4-dicarboxylate transport protein (447 aa).

A run of 8 helical transmembrane segments spans residues 19 to 39, 55 to 75, 90 to 110, 155 to 175, 199 to 219, 232 to 252, 343 to 363, and 366 to 386; these read ILYV…HFYP, LVKM…IAGL, IYFL…ANVV, AFAS…GIAL, LVAI…AFTI, MLVG…LGLV, LLLV…AGFI, and AATL…ILGV.

This sequence belongs to the dicarboxylate/amino acid:cation symporter (DAACS) (TC 2.A.23) family.

It is found in the cell inner membrane. Functionally, responsible for the transport of dicarboxylates such as succinate, fumarate, and malate from the periplasm across the membrane. This Rhodospirillum rubrum (strain ATCC 11170 / ATH 1.1.1 / DSM 467 / LMG 4362 / NCIMB 8255 / S1) protein is C4-dicarboxylate transport protein.